A 728-amino-acid polypeptide reads, in one-letter code: Leucine-rich repeat and calponin homology domain-containing protein 1 (728 aa).

Residues 24-36 show a composition bias toward basic residues; the sequence is HHPHHHHHHHQHH. Positions 24–57 are disordered; it reads HHPHHHHHHHQHHGGTGAPGGAGGGGGGSGGFNL. The segment covering 37-54 has biased composition (gly residues); it reads GGTGAPGGAGGGGGGSGG. 9 LRR repeats span residues 98-119, 121-143, 144-166, 167-187, 189-210, 212-234, 235-255, 257-278, and 283-304; these read DTVQ…LCHF, SLEI…VNLQ, MLTY…CGLP, LKVL…IGQL, QLME…IGQL, SLRE…VDLS, LVKF…FREM, QLQV…ICTK, and IFKY…YLHT. A compositionally biased stretch (basic and acidic residues) spans 311-322; the sequence is HQHVEDGKKDSD. The interval 311-348 is disordered; that stretch reads HQHVEDGKKDSDSGVGSDNGDKRLSATEPSDEDTVSLN. Ser-370 carries the phosphoserine modification. Positions 377–398 are disordered; the sequence is HQEFQPEPSLLGDSTNSGEERD. Phosphoserine is present on Ser-409. The span at 516 to 525 shows a compositional bias: polar residues; sequence LQSNGSQYSP. Positions 516–547 are disordered; the sequence is LQSNGSQYSPNEIRENSPAVSPTTNSTAPFGL. A phosphoserine mark is found at Ser-532 and Ser-536. Positions 533-543 are enriched in polar residues; the sequence is PAVSPTTNSTA. Thr-568 carries the post-translational modification Phosphothreonine. Positions 576 to 692 constitute a Calponin-homology (CH) domain; the sequence is MREEKELVEQ…TLLALGEKAP (117 aa).

As to quaternary structure, interacts (via LRR repeats) with unphosphorylated DOCK8 (via DHR-2 domain); the interaction prevents the interaction between DOCK8 and CDC42.

Its subcellular location is the cytoplasm. In terms of biological role, acts as a negative regulator of GTPase CDC42 by sequestering CDC42-guanine exchange factor DOCK8. Probably by preventing CDC42 activation, negatively regulates CD4(+) T-cell migration. The polypeptide is Leucine-rich repeat and calponin homology domain-containing protein 1 (LRCH1) (Homo sapiens (Human)).